The chain runs to 269 residues: Formamidopyrimidine-DNA glycosylase (269 aa).

Catalysis depends on Pro2, which acts as the Schiff-base intermediate with DNA. Glu3 acts as the Proton donor in catalysis. Catalysis depends on Lys57, which acts as the Proton donor; for beta-elimination activity. Positions 90, 109, and 150 each coordinate DNA. Residues 235 to 269 (QVYGRAGEACLTCGTTIKRSKHGQRTTFYCPHCQR) form an FPG-type zinc finger. Arg259 (proton donor; for delta-elimination activity) is an active-site residue.

The protein belongs to the FPG family. Monomer. Zn(2+) is required as a cofactor.

It carries out the reaction Hydrolysis of DNA containing ring-opened 7-methylguanine residues, releasing 2,6-diamino-4-hydroxy-5-(N-methyl)formamidopyrimidine.. It catalyses the reaction 2'-deoxyribonucleotide-(2'-deoxyribose 5'-phosphate)-2'-deoxyribonucleotide-DNA = a 3'-end 2'-deoxyribonucleotide-(2,3-dehydro-2,3-deoxyribose 5'-phosphate)-DNA + a 5'-end 5'-phospho-2'-deoxyribonucleoside-DNA + H(+). In terms of biological role, involved in base excision repair of DNA damaged by oxidation or by mutagenic agents. Acts as a DNA glycosylase that recognizes and removes damaged bases. Has a preference for oxidized purines, such as 7,8-dihydro-8-oxoguanine (8-oxoG). Has AP (apurinic/apyrimidinic) lyase activity and introduces nicks in the DNA strand. Cleaves the DNA backbone by beta-delta elimination to generate a single-strand break at the site of the removed base with both 3'- and 5'-phosphates. This is Formamidopyrimidine-DNA glycosylase from Edwardsiella ictaluri (strain 93-146).